Here is a 198-residue protein sequence, read N- to C-terminus: Elongation factor Ts (198 aa).

Positions 82 to 85 (TDFV) are involved in Mg(2+) ion dislocation from EF-Tu.

It belongs to the EF-Ts family.

The protein localises to the cytoplasm. Its function is as follows. Associates with the EF-Tu.GDP complex and induces the exchange of GDP to GTP. It remains bound to the aminoacyl-tRNA.EF-Tu.GTP complex up to the GTP hydrolysis stage on the ribosome. In Oleidesulfovibrio alaskensis (strain ATCC BAA-1058 / DSM 17464 / G20) (Desulfovibrio alaskensis), this protein is Elongation factor Ts.